A 260-amino-acid chain; its full sequence is Adenosylcobinamide-GDP ribazoletransferase (260 aa).

The next 7 membrane-spanning stretches (helical) occupy residues 31–51 (IIFF…LVNI), 55–75 (IFSS…VRGI), 111–131 (VIGV…FAFV), 140–160 (FLIF…LMYY), 177–197 (ISSW…VYFT), 202–222 (FIFL…LKKF), and 234–254 (HLGA…LLGE).

Belongs to the CobS family. It depends on Mg(2+) as a cofactor.

The protein localises to the cell inner membrane. It carries out the reaction alpha-ribazole + adenosylcob(III)inamide-GDP = adenosylcob(III)alamin + GMP + H(+). It catalyses the reaction alpha-ribazole 5'-phosphate + adenosylcob(III)inamide-GDP = adenosylcob(III)alamin 5'-phosphate + GMP + H(+). It participates in cofactor biosynthesis; adenosylcobalamin biosynthesis; adenosylcobalamin from cob(II)yrinate a,c-diamide: step 7/7. In terms of biological role, joins adenosylcobinamide-GDP and alpha-ribazole to generate adenosylcobalamin (Ado-cobalamin). Also synthesizes adenosylcobalamin 5'-phosphate from adenosylcobinamide-GDP and alpha-ribazole 5'-phosphate. This Thermodesulfovibrio yellowstonii (strain ATCC 51303 / DSM 11347 / YP87) protein is Adenosylcobinamide-GDP ribazoletransferase.